Here is a 90-residue protein sequence, read N- to C-terminus: Small ribosomal subunit protein uS15 (90 aa).

Belongs to the universal ribosomal protein uS15 family. Part of the 30S ribosomal subunit. Forms a bridge to the 50S subunit in the 70S ribosome, contacting the 23S rRNA.

In terms of biological role, one of the primary rRNA binding proteins, it binds directly to 16S rRNA where it helps nucleate assembly of the platform of the 30S subunit by binding and bridging several RNA helices of the 16S rRNA. Functionally, forms an intersubunit bridge (bridge B4) with the 23S rRNA of the 50S subunit in the ribosome. The sequence is that of Small ribosomal subunit protein uS15 from Helicobacter hepaticus (strain ATCC 51449 / 3B1).